The sequence spans 42 residues: Potassium channel toxin gamma-KTx 3.4 (42 aa).

4 disulfide bridges follow: Cys-5/Cys-23, Cys-11/Cys-34, Cys-20/Cys-39, and Cys-24/Cys-41.

The protein belongs to the ergtoxin family. Gamma-KTx 3 subfamily. In terms of tissue distribution, expressed by the venom gland.

Its subcellular location is the secreted. In terms of biological role, blocks Kv11/ERG potassium channels. The sequence is that of Potassium channel toxin gamma-KTx 3.4 from Centruroides gracilis (Slenderbrown scorpion).